The following is a 120-amino-acid chain: Ribosome-binding factor A (120 aa).

It belongs to the RbfA family. As to quaternary structure, monomer. Binds 30S ribosomal subunits, but not 50S ribosomal subunits or 70S ribosomes.

Its subcellular location is the cytoplasm. Its function is as follows. One of several proteins that assist in the late maturation steps of the functional core of the 30S ribosomal subunit. Associates with free 30S ribosomal subunits (but not with 30S subunits that are part of 70S ribosomes or polysomes). Required for efficient processing of 16S rRNA. May interact with the 5'-terminal helix region of 16S rRNA. The chain is Ribosome-binding factor A from Verminephrobacter eiseniae (strain EF01-2).